Reading from the N-terminus, the 319-residue chain is Meiotic drive suppressor wtf16 (319 aa).

Disordered stretches follow at residues 1-22 (MKNN…KTGH) and 35-68 (DSEE…RSTD). Transmembrane regions (helical) follow at residues 73-93 (FLIK…LAIC), 110-130 (WTLF…LTYF), 153-173 (VVII…CIKF), 187-207 (CSIS…FWTL), 215-235 (FQVL…MYLF), and 241-261 (ATGY…FFFY).

Belongs to the WTF family. Homomer. Interacts with other proteins that exhibit high sequence similarity.

Its subcellular location is the spore membrane. It is found in the vacuole membrane. Acts as a suppressor component of the dual wtf meiotic drive system, and can suppress but not confer meiotic drive by compatible poisons. Wtf meiotic drive systems promote unequal transmission of alleles from the parental zygote to progeny spores by encoding a poison and an antidote from the same locus; the poison is trans-acting and forms toxic aggregates in all spores within an ascus, wherease the antidote is spore-specific and targets aggregates for degradation by the vacuole. Meiotic drive by wtf systems therefore lead to poisoning of all progeny that do not inherit the dual poison/antidote allele, or express a compatible antidote. In Schizosaccharomyces pombe (strain 972 / ATCC 24843) (Fission yeast), this protein is Meiotic drive suppressor wtf16.